The chain runs to 389 residues: tRNA-specific 2-thiouridylase MnmA (389 aa).

Residues 35 to 42 (GMSGGVDS) and methionine 61 contribute to the ATP site. Positions 121–123 (NPD) are interaction with target base in tRNA. The active-site Nucleophile is cysteine 126. An intrachain disulfide couples cysteine 126 to cysteine 223. Glycine 151 lines the ATP pocket. The segment at 173–175 (KDQ) is interaction with tRNA. Cysteine 223 (cysteine persulfide intermediate) is an active-site residue. The segment at 335–336 (RY) is interaction with tRNA.

The protein belongs to the MnmA/TRMU family.

The protein resides in the cytoplasm. The catalysed reaction is S-sulfanyl-L-cysteinyl-[protein] + uridine(34) in tRNA + AH2 + ATP = 2-thiouridine(34) in tRNA + L-cysteinyl-[protein] + A + AMP + diphosphate + H(+). Functionally, catalyzes the 2-thiolation of uridine at the wobble position (U34) of tRNA, leading to the formation of s(2)U34. In Actinobacillus succinogenes (strain ATCC 55618 / DSM 22257 / CCUG 43843 / 130Z), this protein is tRNA-specific 2-thiouridylase MnmA.